Reading from the N-terminus, the 904-residue chain is Phosphoenolpyruvate carboxylase (904 aa).

Residues His151 and Lys570 contribute to the active site.

Belongs to the PEPCase type 1 family. Mg(2+) serves as cofactor.

It catalyses the reaction oxaloacetate + phosphate = phosphoenolpyruvate + hydrogencarbonate. Functionally, forms oxaloacetate, a four-carbon dicarboxylic acid source for the tricarboxylic acid cycle. The sequence is that of Phosphoenolpyruvate carboxylase from Xanthomonas campestris pv. campestris (strain ATCC 33913 / DSM 3586 / NCPPB 528 / LMG 568 / P 25).